A 207-amino-acid polypeptide reads, in one-letter code: MLNKLSLLLKDAGISLTDHQKNQLIAYVNMLHKWNKAYNLTSVRDPNEMLVRHILDSIVVAPYLQGERFIDVGTGPGLPGIPLSIVRPEAHFTLLDSLGKRVRFLRQVQHELKLENIEPVQSRVEEFPSEPPFDGVISRAFASLNDMVSWCHHLPGEQGRFYALKGQMPEDEIALLPEEYQVESVVKLQVPALDGERHLVVIKANKI.

S-adenosyl-L-methionine-binding positions include Gly73, Leu78, 124-125 (VE), and Arg139.

Belongs to the methyltransferase superfamily. RNA methyltransferase RsmG family.

Its subcellular location is the cytoplasm. The catalysed reaction is guanosine(527) in 16S rRNA + S-adenosyl-L-methionine = N(7)-methylguanosine(527) in 16S rRNA + S-adenosyl-L-homocysteine. Its function is as follows. Specifically methylates the N7 position of guanine in position 527 of 16S rRNA. The sequence is that of Ribosomal RNA small subunit methyltransferase G from Escherichia coli O1:K1 / APEC.